A 130-amino-acid polypeptide reads, in one-letter code: Large ribosomal subunit protein bL19 (130 aa).

It belongs to the bacterial ribosomal protein bL19 family.

Functionally, this protein is located at the 30S-50S ribosomal subunit interface and may play a role in the structure and function of the aminoacyl-tRNA binding site. This chain is Large ribosomal subunit protein bL19, found in Parvibaculum lavamentivorans (strain DS-1 / DSM 13023 / NCIMB 13966).